Here is a 500-residue protein sequence, read N- to C-terminus: Aspartyl/glutamyl-tRNA(Asn/Gln) amidotransferase subunit B (500 aa).

Belongs to the GatB/GatE family. GatB subfamily. As to quaternary structure, heterotrimer of A, B and C subunits.

The enzyme catalyses L-glutamyl-tRNA(Gln) + L-glutamine + ATP + H2O = L-glutaminyl-tRNA(Gln) + L-glutamate + ADP + phosphate + H(+). It carries out the reaction L-aspartyl-tRNA(Asn) + L-glutamine + ATP + H2O = L-asparaginyl-tRNA(Asn) + L-glutamate + ADP + phosphate + 2 H(+). Allows the formation of correctly charged Asn-tRNA(Asn) or Gln-tRNA(Gln) through the transamidation of misacylated Asp-tRNA(Asn) or Glu-tRNA(Gln) in organisms which lack either or both of asparaginyl-tRNA or glutaminyl-tRNA synthetases. The reaction takes place in the presence of glutamine and ATP through an activated phospho-Asp-tRNA(Asn) or phospho-Glu-tRNA(Gln). This chain is Aspartyl/glutamyl-tRNA(Asn/Gln) amidotransferase subunit B, found in Rhizobium johnstonii (strain DSM 114642 / LMG 32736 / 3841) (Rhizobium leguminosarum bv. viciae).